Reading from the N-terminus, the 263-residue chain is Splicing regulator sde2 (263 aa).

The propeptide at 1-84 is UBL; sequence MECKTVFLNG…LTLCTRVLGG (84 aa). Disordered regions lie at residues 95-118, 137-158, and 194-263; these read AGGR…LDGN, PAET…LAAD, and STSA…LYGL. Basic and acidic residues predominate over residues 102-117; it reads KRNEQENQDSCRDLDG. 2 stretches are compositionally biased toward low complexity: residues 194–209 and 219–230; these read STSA…GATT and NNNSSINSWSRR.

Belongs to the SDE2 family. Interacts with cay1/cactin. Interacts with prp19. Interacts with cwf12. Interacts with cdc5. The N-terminal UBL (ubiquitin-like) propeptide is cleaved at Gly-84 by the deubiquitinating enzymes ubp5 and ubp15; the resulting mature sde2 associates with spliceosomes. In terms of processing, polyubiquitinated; ubiquitination is partially dependent on ubr11.

The protein localises to the cytoplasm. Its subcellular location is the nucleus. Functionally, plays a role in pre-mRNA splicing by facilitating excision of introns featuring relatively long (&gt;21 nucleotides) spacing between the branchpoint and 3'-splice site (ss). Recruits cactin to the spliceosome which may enable folding of RNA between the branchpoint and 3'-ss, to guide the splice site towards the spliceosome's catalytic center. Required for proper chromatin organization by assisting splicing of components involved in genomic stability and telomere organization. The protein is Splicing regulator sde2 of Schizosaccharomyces pombe (strain 972 / ATCC 24843) (Fission yeast).